The chain runs to 211 residues: ATP phosphoribosyltransferase (211 aa).

This sequence belongs to the ATP phosphoribosyltransferase family. Short subfamily. In terms of assembly, heteromultimer composed of HisG and HisZ subunits.

It localises to the cytoplasm. The enzyme catalyses 1-(5-phospho-beta-D-ribosyl)-ATP + diphosphate = 5-phospho-alpha-D-ribose 1-diphosphate + ATP. The protein operates within amino-acid biosynthesis; L-histidine biosynthesis; L-histidine from 5-phospho-alpha-D-ribose 1-diphosphate: step 1/9. Functionally, catalyzes the condensation of ATP and 5-phosphoribose 1-diphosphate to form N'-(5'-phosphoribosyl)-ATP (PR-ATP). Has a crucial role in the pathway because the rate of histidine biosynthesis seems to be controlled primarily by regulation of HisG enzymatic activity. This Lacticaseibacillus casei (strain BL23) (Lactobacillus casei) protein is ATP phosphoribosyltransferase.